A 356-amino-acid polypeptide reads, in one-letter code: Phospho-N-acetylmuramoyl-pentapeptide-transferase (356 aa).

The next 9 membrane-spanning stretches (helical) occupy residues Ala27–Met47, Met74–Ala94, Tyr97–Tyr117, Val128–Ile148, Pro164–Ala184, Val201–Ala221, Ala241–Met261, Ile284–Val304, and Thr333–Leu353.

This sequence belongs to the glycosyltransferase 4 family. MraY subfamily. Mg(2+) serves as cofactor.

It is found in the cell inner membrane. The catalysed reaction is UDP-N-acetyl-alpha-D-muramoyl-L-alanyl-gamma-D-glutamyl-meso-2,6-diaminopimeloyl-D-alanyl-D-alanine + di-trans,octa-cis-undecaprenyl phosphate = di-trans,octa-cis-undecaprenyl diphospho-N-acetyl-alpha-D-muramoyl-L-alanyl-D-glutamyl-meso-2,6-diaminopimeloyl-D-alanyl-D-alanine + UMP. It participates in cell wall biogenesis; peptidoglycan biosynthesis. In terms of biological role, catalyzes the initial step of the lipid cycle reactions in the biosynthesis of the cell wall peptidoglycan: transfers peptidoglycan precursor phospho-MurNAc-pentapeptide from UDP-MurNAc-pentapeptide onto the lipid carrier undecaprenyl phosphate, yielding undecaprenyl-pyrophosphoryl-MurNAc-pentapeptide, known as lipid I. In Zymomonas mobilis subsp. mobilis (strain ATCC 31821 / ZM4 / CP4), this protein is Phospho-N-acetylmuramoyl-pentapeptide-transferase.